The primary structure comprises 339 residues: Carboxyvinyl-carboxyphosphonate phosphorylmutase, chloroplastic (339 aa).

A chloroplast-targeting transit peptide spans M1 to R30.

This sequence belongs to the isocitrate lyase/PEP mutase superfamily.

The protein localises to the plastid. It localises to the chloroplast. It carries out the reaction 1-carboxyvinyl carboxyphosphonate + H(+) = 3-(hydrohydroxyphosphoryl)pyruvate + CO2. The protein is Carboxyvinyl-carboxyphosphonate phosphorylmutase, chloroplastic of Arabidopsis thaliana (Mouse-ear cress).